The sequence spans 159 residues: MRCPFCGSDNTSVKDSRAAEDDTAVRRRRVCESCGARFTTFERVQLREIIVVKRDGKRSLFDREKLQRSILIALRKRPVDRDRIDQMVSGIVRKLESGGETEVPSSEVGELVMEALKRVDPVGYVRYASVYRDFKDPSDFAQFIEKAALEDEDDDADGK.

A zinc finger spans residues 3–34; the sequence is CPFCGSDNTSVKDSRAAEDDTAVRRRRVCESC. The ATP-cone domain maps to 49-139; sequence IIVVKRDGKR…VYRDFKDPSD (91 aa).

The protein belongs to the NrdR family. Zn(2+) serves as cofactor.

Functionally, negatively regulates transcription of bacterial ribonucleotide reductase nrd genes and operons by binding to NrdR-boxes. This is Transcriptional repressor NrdR from Hyphomonas neptunium (strain ATCC 15444).